Consider the following 227-residue polypeptide: Cytochrome c oxidase subunit 2 (227 aa).

Over 1 to 14 the chain is Mitochondrial intermembrane; the sequence is MAYPMQLGLQDATS. The helical transmembrane segment at 15–45 threads the bilayer; the sequence is PIMEELMNFHDHTLMIVFLISSLVLYLISLM. Over 46–59 the chain is Mitochondrial matrix; it reads LTTKLIHTNTMDAQ. A helical transmembrane segment spans residues 60–87; the sequence is EVETIWTILPAIILVLIALPSLRILYMM. The Mitochondrial intermembrane portion of the chain corresponds to 88–227; that stretch reads DEINNPVLTV…FFENWSSSMT (140 aa). Cu cation is bound by residues His161, Cys196, Glu198, Cys200, His204, and Met207. Mg(2+) is bound at residue Glu198.

The protein belongs to the cytochrome c oxidase subunit 2 family. Component of the cytochrome c oxidase (complex IV, CIV), a multisubunit enzyme composed of 14 subunits. The complex is composed of a catalytic core of 3 subunits MT-CO1, MT-CO2 and MT-CO3, encoded in the mitochondrial DNA, and 11 supernumerary subunits COX4I, COX5A, COX5B, COX6A, COX6B, COX6C, COX7A, COX7B, COX7C, COX8 and NDUFA4, which are encoded in the nuclear genome. The complex exists as a monomer or a dimer and forms supercomplexes (SCs) in the inner mitochondrial membrane with NADH-ubiquinone oxidoreductase (complex I, CI) and ubiquinol-cytochrome c oxidoreductase (cytochrome b-c1 complex, complex III, CIII), resulting in different assemblies (supercomplex SCI(1)III(2)IV(1) and megacomplex MCI(2)III(2)IV(2)). Found in a complex with TMEM177, COA6, COX18, COX20, SCO1 and SCO2. Interacts with TMEM177 in a COX20-dependent manner. Interacts with COX20. Interacts with COX16. Requires Cu cation as cofactor.

It is found in the mitochondrion inner membrane. The catalysed reaction is 4 Fe(II)-[cytochrome c] + O2 + 8 H(+)(in) = 4 Fe(III)-[cytochrome c] + 2 H2O + 4 H(+)(out). Component of the cytochrome c oxidase, the last enzyme in the mitochondrial electron transport chain which drives oxidative phosphorylation. The respiratory chain contains 3 multisubunit complexes succinate dehydrogenase (complex II, CII), ubiquinol-cytochrome c oxidoreductase (cytochrome b-c1 complex, complex III, CIII) and cytochrome c oxidase (complex IV, CIV), that cooperate to transfer electrons derived from NADH and succinate to molecular oxygen, creating an electrochemical gradient over the inner membrane that drives transmembrane transport and the ATP synthase. Cytochrome c oxidase is the component of the respiratory chain that catalyzes the reduction of oxygen to water. Electrons originating from reduced cytochrome c in the intermembrane space (IMS) are transferred via the dinuclear copper A center (CU(A)) of subunit 2 and heme A of subunit 1 to the active site in subunit 1, a binuclear center (BNC) formed by heme A3 and copper B (CU(B)). The BNC reduces molecular oxygen to 2 water molecules using 4 electrons from cytochrome c in the IMS and 4 protons from the mitochondrial matrix. The sequence is that of Cytochrome c oxidase subunit 2 (MT-CO2) from Desmodillus auricularis (Cape short-eared gerbil).